The primary structure comprises 81 residues: UPF0248 protein TK0315 (81 aa).

The protein belongs to the UPF0248 family.

In Thermococcus kodakarensis (strain ATCC BAA-918 / JCM 12380 / KOD1) (Pyrococcus kodakaraensis (strain KOD1)), this protein is UPF0248 protein TK0315.